The primary structure comprises 2193 residues: Non-reducing polyketide synthase esdpA (2193 aa).

A Starter acyltransferase (SAT) domain is found at 90–252; that stretch reads NVLLAPLTVL…AKVQVNGRYH (163 aa). Residues 381–797 form the Ketosynthase family 3 (KS3) domain; that stretch reads DECVAIVGAA…GNNTVIIVCE (417 aa). Residues C546, H682, and H720 each act as for beta-ketoacyl synthase activity in the active site. Residues 906-1158 enclose the Malonyl-CoA:ACP transacylase (MAT) domain; that stretch reads VFSGQSGMTV…YFVDAVRRIK (253 aa). Catalysis depends on S992, which acts as the For acyl/malonyl transferase activity. Residues 1265–1392 are N-terminal hotdog fold; sequence PPMLSLENFS…GRVVLEDRRR (128 aa). In terms of domain architecture, PKS/mFAS DH spans 1265–1569; it reads PPMLSLENFS…FVKISSHILQ (305 aa). The C-terminal hotdog fold stretch occupies residues 1419 to 1569; that stretch reads VFSASGSIAY…FVKISSHILQ (151 aa). D1479 functions as the Proton donor; for dehydratase activity in the catalytic mechanism. The 77-residue stretch at 1723 to 1799 folds into the Carrier domain; the sequence is RILSDSMIKL…ELHDLMQSHP (77 aa). The residue at position 1759 (S1759) is an O-(pantetheine 4'-phosphoryl)serine. The interval 1944–2177 is methyltransferase (CMeT) domain; that stretch reads YHGSEHKLLR…GFTHVDWSND (234 aa).

Pantetheine 4'-phosphate serves as cofactor.

Its pathway is secondary metabolite biosynthesis; terpenoid biosynthesis. Functionally, non-reducing polyketide synthase; part of the cluster that mediates the biosynthesis of shearones, diterpenoid pyrones (DPs) which are structurally diverse meroterpenoids consisting of a diterpene linked by a pyrone, and which may exhibit a range of bioactivities. Whitin the pathway, esdpA takes part to the biosynthesis of the molecular scaffold via the production of the alpha-pyrone from one molecule of acetyl-CoA, two molecules of malonyl-CoA and one molecule of S-adenosyl-L-methionine (SAM). The molecular scaffold is commonly biosynthesized by a series of enzymes including the non-reducing polyketide synthase (NR-PKS) esdpA that generates an alpha-pyrone; the prenyltransferase esdpC that attaches a geranylgeranyl pyrophosphate (GGPP) produced by the GGPP synthase (GGPPS) esdpD onto the pyrone unit; the FAD-dependent monooxygenase esdpE that converts an olefin on the diterpene unit into an epoxide; and the terpene cyclase esdpB that catalyzes the cyclization reactions to give the molecular backbone shearone A. In the modification steps, esdpF oxidizes the hydroxy group to a ketone at C-3 and esdpG then attaches hydroxy groups at both C-11 and C-12. After that, esdpI hydroxylates at C-20 and esdpH hydroxylates at C-6'. The ether bridge is generated by nucleophilic attack of the hydroxy group at C-20 to the carbonyl carbon at C-3. EsdpH can also functions prior to esdpI. The different combinations of these modification enzymes lead to the production of diverse shearone derivatives, shearone I being the end product of the pathway. The alpha-ketoglutarate-dependent dioxygenase esdpJ seems not to be involved in this pathway. This chain is Non-reducing polyketide synthase esdpA, found in Penicillium shearii (Eupenicillium shearii).